The sequence spans 458 residues: tRNA-2-methylthio-N(6)-dimethylallyladenosine synthase (458 aa).

One can recognise an MTTase N-terminal domain in the interval 2-118; sequence PKLYIKTYGC…VFEHVDGILR (117 aa). [4Fe-4S] cluster-binding residues include cysteine 11, cysteine 47, cysteine 81, cysteine 170, cysteine 174, and cysteine 177. Positions 156-389 constitute a Radical SAM core domain; that stretch reads PGVRSTAYVS…LAVVNEIAIR (234 aa). The 64-residue stretch at 392–455 folds into the TRAM domain; sequence RDLVGTVQEV…GFTLYGVPCP (64 aa).

This sequence belongs to the methylthiotransferase family. MiaB subfamily. In terms of assembly, monomer. It depends on [4Fe-4S] cluster as a cofactor.

Its subcellular location is the cytoplasm. The catalysed reaction is N(6)-dimethylallyladenosine(37) in tRNA + (sulfur carrier)-SH + AH2 + 2 S-adenosyl-L-methionine = 2-methylsulfanyl-N(6)-dimethylallyladenosine(37) in tRNA + (sulfur carrier)-H + 5'-deoxyadenosine + L-methionine + A + S-adenosyl-L-homocysteine + 2 H(+). Its function is as follows. Catalyzes the methylthiolation of N6-(dimethylallyl)adenosine (i(6)A), leading to the formation of 2-methylthio-N6-(dimethylallyl)adenosine (ms(2)i(6)A) at position 37 in tRNAs that read codons beginning with uridine. The chain is tRNA-2-methylthio-N(6)-dimethylallyladenosine synthase from Akkermansia muciniphila (strain ATCC BAA-835 / DSM 22959 / JCM 33894 / BCRC 81048 / CCUG 64013 / CIP 107961 / Muc).